The primary structure comprises 80 residues: uncharacterized protein (80 aa).

Positions 1-20 (MVAADHRALGSNKSYPASQT) are cleaved as a signal peptide. The disordered stretch occupies residues 1 to 21 (MVAADHRALGSNKSYPASQTA). The span at 11–21 (SNKSYPASQTA) shows a compositional bias: polar residues.

This is an uncharacterized protein from Mycobacterium tuberculosis (strain CDC 1551 / Oshkosh).